The chain runs to 62 residues: Photosystem II reaction center protein Z (62 aa).

2 helical membrane passes run Ala8–Ala28 and Phe41–Ile61.

Belongs to the PsbZ family. PSII is composed of 1 copy each of membrane proteins PsbA, PsbB, PsbC, PsbD, PsbE, PsbF, PsbH, PsbI, PsbJ, PsbK, PsbL, PsbM, PsbT, PsbY, PsbZ, Psb30/Ycf12, at least 3 peripheral proteins of the oxygen-evolving complex and a large number of cofactors. It forms dimeric complexes.

It localises to the plastid. The protein localises to the chloroplast thylakoid membrane. In terms of biological role, may control the interaction of photosystem II (PSII) cores with the light-harvesting antenna, regulates electron flow through the 2 photosystem reaction centers. PSII is a light-driven water plastoquinone oxidoreductase, using light energy to abstract electrons from H(2)O, generating a proton gradient subsequently used for ATP formation. This is Photosystem II reaction center protein Z from Nicotiana sylvestris (Wood tobacco).